Reading from the N-terminus, the 100-residue chain is MTERFNDRLADVIRRPLITEKATSALEQNQYTFEVDHRAAKPDIKAAVEQLFDVRVVGISTMNPPRRSRRVGRFTGKRAQVKKAIVRLAEGNTIQLFPES.

This sequence belongs to the universal ribosomal protein uL23 family. Part of the 50S ribosomal subunit. Contacts protein L29, and trigger factor when it is bound to the ribosome.

Its function is as follows. One of the early assembly proteins it binds 23S rRNA. One of the proteins that surrounds the polypeptide exit tunnel on the outside of the ribosome. Forms the main docking site for trigger factor binding to the ribosome. The protein is Large ribosomal subunit protein uL23 of Prochlorococcus marinus (strain MIT 9313).